We begin with the raw amino-acid sequence, 141 residues long: Nucleoside diphosphate kinase (141 aa).

6 residues coordinate ATP: Lys-11, Phe-59, Arg-87, Thr-93, Arg-104, and Asn-114. His-117 (pros-phosphohistidine intermediate) is an active-site residue.

Belongs to the NDK family. As to quaternary structure, homotetramer. Mg(2+) is required as a cofactor.

The protein resides in the cytoplasm. It catalyses the reaction a 2'-deoxyribonucleoside 5'-diphosphate + ATP = a 2'-deoxyribonucleoside 5'-triphosphate + ADP. The enzyme catalyses a ribonucleoside 5'-diphosphate + ATP = a ribonucleoside 5'-triphosphate + ADP. Its function is as follows. Major role in the synthesis of nucleoside triphosphates other than ATP. The ATP gamma phosphate is transferred to the NDP beta phosphate via a ping-pong mechanism, using a phosphorylated active-site intermediate. The protein is Nucleoside diphosphate kinase of Legionella pneumophila (strain Lens).